Consider the following 409-residue polypeptide: MLTRGFTSIGKIASRGLSSTFYQDAFQLSDQLTEDERSLMLSAREYCQERLLPRVTEAYRTEKFDPSLIPEMGSMGLLGAPYQGYGCAGTSTVGYGLIAREVERVDSGYRSTMSVQTSLVIGPIYNYGSEDQKQKYIPDLASGKKIGCFGLTEPNHGSNPGGMETKATWDETTKTYKLNGSKTWISNSPVSDVMVVWARSARHNNKIKGFILERGMKGLTTPKIEGKLSLRASITGQIAMDDVPVPEENLLPNAEGLQGPFGCLNNARLGIAWGALGAAEECFHLARQYTLDRQQFGRPLAQNQLMQLKMADMLTEISLGLQGCLRVSRLKDEGKVQSEQISIIKRNSCGKALEVARKARDMLGGNGIVDEYHIMRHMVNLETVNTYEGTHDVHALILGRAITGLNGFC.

110 to 111 provides a ligand contact to substrate; sequence RS. Residues 149–152, Ser-158, and 184–186 contribute to the FAD site; these read FGLT and WIS. A substrate-binding site is contributed by Ser-158. Substrate contacts are provided by residues 261–265 and Arg-268; that span reads FGCLN. The Proton acceptor role is filled by Glu-388. 2 residues coordinate FAD: Thr-390 and Phe-408.

The protein belongs to the acyl-CoA dehydrogenase family. FAD is required as a cofactor.

It is found in the mitochondrion matrix. It catalyses the reaction glutaryl-CoA + oxidized [electron-transfer flavoprotein] + 2 H(+) = (2E)-butenoyl-CoA + reduced [electron-transfer flavoprotein] + CO2. The protein operates within amino-acid metabolism; lysine degradation. Its pathway is amino-acid metabolism; tryptophan metabolism. This Caenorhabditis elegans protein is Probable glutaryl-CoA dehydrogenase, mitochondrial.